Here is a 1115-residue protein sequence, read N- to C-terminus: Carbamoyl phosphate synthase large chain (1115 aa).

Residues 1–407 are carboxyphosphate synthetic domain; it reads MPRRTDLHHV…ALGKVMRSLE (407 aa). The ATP site is built by Arg-134, Arg-174, Gly-180, Gly-181, Glu-213, Ile-215, Glu-220, Gly-246, Val-247, His-248, Gln-290, and Glu-304. The ATP-grasp 1 domain occupies 138 to 333; it reads KDIVAKAGGE…IAKIAAKLAI (196 aa). Mg(2+) contacts are provided by Gln-290, Glu-304, and Asn-306. The Mn(2+) site is built by Gln-290, Glu-304, and Asn-306. The interval 408 to 559 is oligomerization domain; the sequence is TTRAGFWTAP…ELDPAAETEV (152 aa). The interval 560–965 is carbamoyl phosphate synthetic domain; it reads APQTERPKVL…AFAKSQTAAY (406 aa). Residues 693-884 form the ATP-grasp 2 domain; it reads GDLLSAAGLP…LAKACARIML (192 aa). Residues Arg-729, Arg-768, Leu-770, Glu-775, Gly-800, Ile-801, His-802, Ser-803, Gln-843, and Glu-855 each contribute to the ATP site. The Mg(2+) site is built by Gln-843, Glu-855, and Asn-857. Gln-843, Glu-855, and Asn-857 together coordinate Mn(2+). Residues 966 to 1113 form the MGS-like domain; sequence GSLPAQGTVF…QELHRVIGGV (148 aa). An allosteric domain region spans residues 966–1115; it reads GSLPAQGTVF…LHRVIGGVER (150 aa).

This sequence belongs to the CarB family. Composed of two chains; the small (or glutamine) chain promotes the hydrolysis of glutamine to ammonia, which is used by the large (or ammonia) chain to synthesize carbamoyl phosphate. Tetramer of heterodimers (alpha,beta)4. Requires Mg(2+) as cofactor. Mn(2+) is required as a cofactor.

The catalysed reaction is hydrogencarbonate + L-glutamine + 2 ATP + H2O = carbamoyl phosphate + L-glutamate + 2 ADP + phosphate + 2 H(+). It catalyses the reaction hydrogencarbonate + NH4(+) + 2 ATP = carbamoyl phosphate + 2 ADP + phosphate + 2 H(+). Its pathway is amino-acid biosynthesis; L-arginine biosynthesis; carbamoyl phosphate from bicarbonate: step 1/1. It participates in pyrimidine metabolism; UMP biosynthesis via de novo pathway; (S)-dihydroorotate from bicarbonate: step 1/3. Large subunit of the glutamine-dependent carbamoyl phosphate synthetase (CPSase). CPSase catalyzes the formation of carbamoyl phosphate from the ammonia moiety of glutamine, carbonate, and phosphate donated by ATP, constituting the first step of 2 biosynthetic pathways, one leading to arginine and/or urea and the other to pyrimidine nucleotides. The large subunit (synthetase) binds the substrates ammonia (free or transferred from glutamine from the small subunit), hydrogencarbonate and ATP and carries out an ATP-coupled ligase reaction, activating hydrogencarbonate by forming carboxy phosphate which reacts with ammonia to form carbamoyl phosphate. The protein is Carbamoyl phosphate synthase large chain of Mycobacterium tuberculosis (strain CDC 1551 / Oshkosh).